The following is a 215-amino-acid chain: 3-demethoxyubiquinol 3-hydroxylase (215 aa).

6 residues coordinate Fe cation: Glu-64, Glu-94, His-97, Glu-146, Glu-178, and His-181.

Belongs to the COQ7 family. Fe cation is required as a cofactor.

It is found in the cell membrane. It carries out the reaction a 5-methoxy-2-methyl-3-(all-trans-polyprenyl)benzene-1,4-diol + AH2 + O2 = a 3-demethylubiquinol + A + H2O. Its pathway is cofactor biosynthesis; ubiquinone biosynthesis. In terms of biological role, catalyzes the hydroxylation of 2-nonaprenyl-3-methyl-6-methoxy-1,4-benzoquinol during ubiquinone biosynthesis. This Azotobacter vinelandii (strain DJ / ATCC BAA-1303) protein is 3-demethoxyubiquinol 3-hydroxylase.